The sequence spans 144 residues: Maximins 7/H6 (144 aa).

The signal sequence occupies residues 1–18 (MNFKYIVAVSFLIASAYA). A propeptide spanning residues 19–43 (RSEENDEQSLSQRDILEEESLREIR) is cleaved from the precursor. An Asparagine amide modification is found at N70. The propeptide occupies 74-123 (TAEDHEVMKRLEAVMRDLDSLDYPEEAAERETRGFNQEEIANLFTKKEKR). A Leucine amide modification is found at L143.

This sequence belongs to the bombinin family. As to expression, expressed by the skin glands.

It localises to the secreted. Maximin-7 shows antimicrobial activity against bacteria and against the fungus C.albicans. It has little hemolytic activity. Functionally, maximin-H6 shows antimicrobial activity against bacteria and against the fungus C.albicans. Shows strong hemolytic activity. The chain is Maximins 7/H6 from Bombina maxima (Giant fire-bellied toad).